We begin with the raw amino-acid sequence, 420 residues long: Tyrosine--tRNA ligase (420 aa).

Residue Tyr36 participates in L-tyrosine binding. The 'HIGH' region motif lies at 41 to 50; sequence PTADSLHIGH. The L-tyrosine site is built by Tyr170 and Gln174. Positions 231-235 match the 'KMSKS' region motif; the sequence is KFGKS. Position 234 (Lys234) interacts with ATP. One can recognise an S4 RNA-binding domain in the interval 353–420; sequence SNIIDVLIET…KKKYFMVNYK (68 aa).

The protein belongs to the class-I aminoacyl-tRNA synthetase family. TyrS type 1 subfamily. Homodimer.

Its subcellular location is the cytoplasm. The enzyme catalyses tRNA(Tyr) + L-tyrosine + ATP = L-tyrosyl-tRNA(Tyr) + AMP + diphosphate + H(+). Functionally, catalyzes the attachment of tyrosine to tRNA(Tyr) in a two-step reaction: tyrosine is first activated by ATP to form Tyr-AMP and then transferred to the acceptor end of tRNA(Tyr). In Staphylococcus haemolyticus (strain JCSC1435), this protein is Tyrosine--tRNA ligase.